Here is a 173-residue protein sequence, read N- to C-terminus: Inorganic pyrophosphatase (173 aa).

Residues Lys26, Arg40, and Tyr52 each coordinate substrate. Mg(2+) contacts are provided by Asp62, Asp67, and Asp99. Position 138 (Tyr138) interacts with substrate.

Belongs to the PPase family. In terms of assembly, homohexamer. Mg(2+) is required as a cofactor.

The protein resides in the cytoplasm. It carries out the reaction diphosphate + H2O = 2 phosphate + H(+). Its function is as follows. Catalyzes the hydrolysis of inorganic pyrophosphate (PPi) forming two phosphate ions. This chain is Inorganic pyrophosphatase, found in Sulfolobus acidocaldarius (strain ATCC 33909 / DSM 639 / JCM 8929 / NBRC 15157 / NCIMB 11770).